The sequence spans 139 residues: Natriuretic peptide Mf-NP (139 aa).

The signal sequence occupies residues 1–25 (MVGLSRLTGGGLLLVLALLPLALDG). Positions 26–75 (KPLEEAPTAPSRIIPFSRPVRKESQAVLDPMVHPERPAGSGDDGDLSRLE) are excised as a propeptide. The cysteines at positions 86 and 102 are disulfide-linked. Positions 117–139 (IIPFSRPVRKESRAALDRMQHPG) are excised as a propeptide.

This sequence belongs to the natriuretic peptide family. Expressed by the venom gland.

It localises to the secreted. Natriuretic peptide that dose-dependently induces the rapid relaxation of rat aortic strips phenylephrine-precontracted. Acts by stimulating cGMP production in a dose-dependent manner (by probably activating NPR1 and/or NPR2). May also show potent hypotensive effects. The chain is Natriuretic peptide Mf-NP from Micrurus fulvius (Eastern coral snake).